A 442-amino-acid chain; its full sequence is Putative neutral sphingomyelinase (442 aa).

Residue Glu46 coordinates Mg(2+). The active-site Proton acceptor is the His264. The segment at 309–330 (ALTGEDDQSSQHQPEIQCNGSS) is disordered. Residues 318-330 (SQHQPEIQCNGSS) show a composition bias toward polar residues. 2 helical membrane passes run 362–384 (RILYYSAATFLFVLLVLLVEFTA) and 391–413 (IFLLLKFIVFGVILFCVFMASIW).

The protein belongs to the neutral sphingomyelinase family.

Its subcellular location is the membrane. The catalysed reaction is a sphingomyelin + H2O = phosphocholine + an N-acylsphing-4-enine + H(+). The protein operates within lipid metabolism; sphingolipid metabolism. This is Putative neutral sphingomyelinase from Drosophila melanogaster (Fruit fly).